A 770-amino-acid chain; its full sequence is Metallothionein expression activator (770 aa).

The interval Leu-77–Trp-97 is disordered. Phosphoserine is present on residues Ser-80, Ser-122, Ser-247, Ser-249, and Ser-253. Thr-259 carries the post-translational modification Phosphothreonine. Positions Pro-286–Leu-323 are disordered. Residues Arg-294–Pro-304 are compositionally biased toward polar residues. Phosphoserine occurs at positions 385, 392, and 483. Residues Thr-486 and Thr-501 each carry the phosphothreonine modification. Ser-564 carries the phosphoserine modification. C2H2-type zinc fingers lie at residues Phe-603–His-627 and Tyr-633–His-657. The C2H2-type 3; atypical zinc finger occupies Tyr-662–Cys-685. Residues Leu-699–Leu-770 are disordered. Over residues Ser-705–Leu-745 the composition is skewed to basic and acidic residues. Ser-709 and Ser-714 each carry phosphoserine. Positions Ala-754–Leu-770 are enriched in polar residues.

Its subcellular location is the nucleus. Functionally, plays a role in regulating basal-level expression of CUP1. Activates EGT2 transcription in the absence of SWI5. This Saccharomyces cerevisiae (strain ATCC 204508 / S288c) (Baker's yeast) protein is Metallothionein expression activator (ACE2).